The primary structure comprises 23 residues: M-myrmeciitoxin-Mp2b (23 aa).

At Q23 the chain carries Glutamine amide.

The protein belongs to the formicidae venom precursor-01 superfamily. Ant pilosulin family. As to quaternary structure, heterodimer with M-MIITX-Mp2a (pilosulin-3a) (AC Q26464); disulfide-linked. Only heterodimers (and not monomers) have been identified in the venom. In terms of tissue distribution, expressed by the venom gland.

The protein resides in the secreted. Functionally, heterodimer protein that may serve both defensive (pain-inducing) and predatory (insecticidal) roles. Has membrane-disrupting activity and shows induction of non-specific calcium influx into cells,. Shows broad-spectrum activity against a diverse range of bacteria, and cell lines, as well as hemolytic activity (EC(50)=2.18 uM). In vivo, shows moderate insecticidal activity against D.melanogaster and potent anthelmintic activity against the veterinary nematode H.contortus. In addition, intraplantar injection into mice induces nocifensive behavior and mechanical allodynia. The chain is M-myrmeciitoxin-Mp2b from Myrmecia pilosula (Jack jumper ant).